Consider the following 60-residue polypeptide: UPF0434 protein HCH_02705 (60 aa).

The protein belongs to the UPF0434 family.

The protein is UPF0434 protein HCH_02705 of Hahella chejuensis (strain KCTC 2396).